The sequence spans 146 residues: UPF0260 protein Swoo_2117 (146 aa).

This sequence belongs to the UPF0260 family.

The protein is UPF0260 protein Swoo_2117 of Shewanella woodyi (strain ATCC 51908 / MS32).